A 383-amino-acid chain; its full sequence is Erythronate-4-phosphate dehydrogenase (383 aa).

Positions 45 and 67 each coordinate substrate. Asp-147 is an NAD(+) binding site. The active site involves Arg-208. Position 232 (Asp-232) interacts with NAD(+). Glu-237 is an active-site residue. His-254 acts as the Proton donor in catalysis. Gly-257 serves as a coordination point for NAD(+). Tyr-258 contacts substrate.

Belongs to the D-isomer specific 2-hydroxyacid dehydrogenase family. PdxB subfamily. Homodimer.

Its subcellular location is the cytoplasm. The catalysed reaction is 4-phospho-D-erythronate + NAD(+) = (R)-3-hydroxy-2-oxo-4-phosphooxybutanoate + NADH + H(+). It functions in the pathway cofactor biosynthesis; pyridoxine 5'-phosphate biosynthesis; pyridoxine 5'-phosphate from D-erythrose 4-phosphate: step 2/5. Catalyzes the oxidation of erythronate-4-phosphate to 3-hydroxy-2-oxo-4-phosphonooxybutanoate. The chain is Erythronate-4-phosphate dehydrogenase from Psychromonas ingrahamii (strain DSM 17664 / CCUG 51855 / 37).